We begin with the raw amino-acid sequence, 301 residues long: Inactive C-alpha-formylglycine-generating enzyme 2 (301 aa).

Positions 1-25 are cleaved as a signal peptide; that stretch reads MGISLSPLLTVLSLLSGRWLELGNG. The cysteines at positions 156 and 290 are disulfide-linked. Asn-191 carries N-linked (GlcNAc...) asparagine glycosylation. 8 residues coordinate Ca(2+): Asn-194, Leu-195, Asp-208, Phe-210, Asp-229, Gly-232, Val-234, and Glu-236. Residues 274–284 are compositionally biased toward polar residues; sequence RMGNTPDSASD. Residues 274 to 301 form a disordered region; sequence RMGNTPDSASDNLGFRCASGAGRPPGEL. A Non-canonical ER retention motif motif is present at residues 298-301; the sequence is PGEL.

Belongs to the sulfatase-modifying factor family. Homodimer and heterodimer with SUMF1.

The protein resides in the endoplasmic reticulum lumen. Lacks formylglycine generating activity and is unable to convert newly synthesized inactive sulfatases to their active form. Inhibits the activation of sulfatases by SUMF1. The chain is Inactive C-alpha-formylglycine-generating enzyme 2 from Bos taurus (Bovine).